We begin with the raw amino-acid sequence, 666 residues long: ATP-dependent zinc metalloprotease FtsH (666 aa).

The segment at Met1 to Pro23 is disordered. Over Met1 to Arg27 the chain is Cytoplasmic. The helical transmembrane segment at Trp28–Pro48 threads the bilayer. The Extracellular segment spans residues Ser49–Gln125. A helical membrane pass occupies residues Val126–Ser146. The Cytoplasmic segment spans residues Gly147–Leu666. Gly219–Thr226 is a binding site for ATP. Zn(2+) is bound at residue His442. Residue Glu443 is part of the active site. His446 and Asp518 together coordinate Zn(2+). The interval Pro626–Leu666 is disordered. The span at Gly641–Gly653 shows a compositional bias: low complexity.

It in the central section; belongs to the AAA ATPase family. This sequence in the C-terminal section; belongs to the peptidase M41 family. As to quaternary structure, homohexamer. Zn(2+) serves as cofactor.

It localises to the cell membrane. Functionally, acts as a processive, ATP-dependent zinc metallopeptidase for both cytoplasmic and membrane proteins. Plays a role in the quality control of integral membrane proteins. The protein is ATP-dependent zinc metalloprotease FtsH of Acidothermus cellulolyticus (strain ATCC 43068 / DSM 8971 / 11B).